We begin with the raw amino-acid sequence, 402 residues long: Beta sliding clamp (402 aa).

Belongs to the beta sliding clamp family. Forms a ring-shaped head-to-tail homodimer around DNA which binds and tethers DNA polymerases and other proteins to the DNA. The DNA replisome complex has a single clamp-loading complex (3 tau and 1 each of delta, delta', psi and chi subunits) which binds 3 Pol III cores (1 core on the leading strand and 2 on the lagging strand) each with a beta sliding clamp dimer. Additional proteins in the replisome are other copies of gamma, psi and chi, Ssb, DNA helicase and RNA primase.

Its subcellular location is the cytoplasm. Functionally, confers DNA tethering and processivity to DNA polymerases and other proteins. Acts as a clamp, forming a ring around DNA (a reaction catalyzed by the clamp-loading complex) which diffuses in an ATP-independent manner freely and bidirectionally along dsDNA. Initially characterized for its ability to contact the catalytic subunit of DNA polymerase III (Pol III), a complex, multichain enzyme responsible for most of the replicative synthesis in bacteria; Pol III exhibits 3'-5' exonuclease proofreading activity. The beta chain is required for initiation of replication as well as for processivity of DNA replication. In Mycobacterium tuberculosis (strain CDC 1551 / Oshkosh), this protein is Beta sliding clamp (dnaN).